The sequence spans 147 residues: Protein phosphatase 1 regulatory subunit 14B (147 aa).

Residues M1–P15 are compositionally biased toward low complexity. Positions M1 to K55 are disordered. A2 carries the N-acetylalanine modification. Position 21 is a phosphoserine (S21). Y29 bears the Phosphotyrosine mark. S32 is subject to Phosphoserine. Position 57 is a phosphothreonine (T57). Positions D61–M103 form a coiled coil.

This sequence belongs to the PP1 inhibitor family. Phosphorylated primarily on Thr-57 by PKC (in vitro). An unknown Ser is also phosphorylated by PKC (in vitro).

It localises to the cytoplasm. Inhibitor of PPP1CA. Has over 50-fold higher inhibitory activity when phosphorylated. The polypeptide is Protein phosphatase 1 regulatory subunit 14B (PPP1R14B) (Sus scrofa (Pig)).